A 147-amino-acid polypeptide reads, in one-letter code: Hemoglobin subunit beta-1 (147 aa).

Residues 3-147 (NLTAKERQLI…IADALGKGYH (145 aa)) enclose the Globin domain. Residues histidine 64 and histidine 93 each coordinate heme b.

The protein belongs to the globin family. In terms of assembly, heterotetramer of two alpha chains and two beta chains. As to expression, red blood cells.

Functionally, involved in oxygen transport from the lung to the various peripheral tissues. In Xenopus tropicalis (Western clawed frog), this protein is Hemoglobin subunit beta-1 (hbb1).